A 185-amino-acid polypeptide reads, in one-letter code: Intraflagellar transport protein 22 homolog (185 aa).

GTP contacts are provided by residues 10 to 17 (GPCESGKT), 63 to 67 (DCGGD), and 123 to 126 (HKPG).

The protein belongs to the small GTPase superfamily. Rab family. Component of the IFT complex B, at least composed of IFT20, IFT22, IFT25, IFT27, IFT46, IFT52, TRAF3IP1/IFT54, IFT57, IFT74, IFT80, IFT81, and IFT88. Interacts with IFT88. Interacts with CFAP61.

It is found in the cell projection. The protein localises to the cilium. Functionally, small GTPase-like component of the intraflagellar transport (IFT) complex B. The chain is Intraflagellar transport protein 22 homolog (IFT22) from Bos taurus (Bovine).